A 324-amino-acid chain; its full sequence is uncharacterized protein (324 aa).

An HTH lysR-type domain is found at 1 to 58 (MDIKVMEYAAEIARRQSFTKAAEHLHIAQPSLSQQIKKLEAELGLTLFHRSHGSVTLT). The segment at residues 18 to 37 (FTKAAEHLHIAQPSLSQQIK) is a DNA-binding region (H-T-H motif).

This sequence belongs to the LysR transcriptional regulatory family.

This is an uncharacterized protein from Bacillus subtilis (strain 168).